The following is a 443-amino-acid chain: Aklavinone 7-beta-L-rhodosaminyltransferase (443 aa).

The N-terminal stretch at 1–23 is a signal peptide; sequence MRVLLTSFALDAHFNGSVPLAWA.

Belongs to the glycosyltransferase 28 family.

The enzyme catalyses dTDP-beta-L-rhodosamine + aklavinone = aclacinomycin T + dTDP + 2 H(+). Its activity is regulated as follows. The activity of AknS is substantially increased by the addition of the accessory protein AknT. Its function is as follows. Involved in the biosynthesis of the anthracycline antitumor agent aclacinomycin A. Catalyzes the transfer of the proximal deoxyhexose, L-rhodosamine, from dTDP-beta-L-rhodosamine to the C7-OH of aklavinone aglycone to yield aclacinomycin T (rhodosaminyl-aklavinone). It can also use dTDP-2-deoxy-beta-L-fucose, TDP-2-deoxyfucose, dTDP-4-amino-2-deoxyrhamnose, TDP-L-rhodosamine as sugar donor and epsilon-rhodomycinone as sugar acceptor. In Streptomyces galilaeus, this protein is Aklavinone 7-beta-L-rhodosaminyltransferase.